Consider the following 279-residue polypeptide: Putative expansin-A26 (279 aa).

The first 27 residues, 1–27, serve as a signal peptide directing secretion; the sequence is MKLLEKMIYVEFLMIIMAMWVVPMSYG. The 111-residue stretch at 76-186 folds into the Expansin-like EG45 domain; the sequence is QGACGYGNLF…RRIPCSKTGG (111 aa). Positions 196 to 275 constitute an Expansin-like CBD domain; it reads YFLMVLIYNV…NWGFGQTFDG (80 aa).

It belongs to the expansin family. Expansin A subfamily.

It is found in the secreted. The protein resides in the cell wall. It localises to the membrane. Its function is as follows. Causes loosening and extension of plant cell walls by disrupting non-covalent bonding between cellulose microfibrils and matrix glucans. No enzymatic activity has been found. This chain is Putative expansin-A26 (EXPA26), found in Arabidopsis thaliana (Mouse-ear cress).